We begin with the raw amino-acid sequence, 161 residues long: Nascent polypeptide-associated complex subunit beta (161 aa).

2 disordered regions span residues 14–41 and 125–161; these read LSAN…KDDS and QNAQ…ADVE. The region spanning 37–102 is the NAC-A/B domain; it reads NKDDSKLQAQ…PQEKSLQDLF (66 aa). Low complexity predominate over residues 125-134; sequence QNAQAAAPAT. Positions 135 to 146 are enriched in basic and acidic residues; it reads EGHEAGEKKDND.

This sequence belongs to the NAC-beta family. Part of the nascent polypeptide-associated complex (NAC), consisting of EGD2 and EGD1. NAC associates with ribosomes via EGD1.

It is found in the cytoplasm. Its subcellular location is the nucleus. Its function is as follows. Component of the nascent polypeptide-associated complex (NAC), a dynamic component of the ribosomal exit tunnel, protecting the emerging polypeptides from interaction with other cytoplasmic proteins to ensure appropriate nascent protein targeting. The NAC complex also promotes mitochondrial protein import by enhancing productive ribosome interactions with the outer mitochondrial membrane and blocks the inappropriate interaction of ribosomes translating non-secretory nascent polypeptides with translocation sites in the membrane of the endoplasmic reticulum. EGD1 may act as a transcription factor that exert a negative effect on the expression of several genes that are transcribed by RNA polymerase II. This is Nascent polypeptide-associated complex subunit beta (EGD1) from Eremothecium gossypii (strain ATCC 10895 / CBS 109.51 / FGSC 9923 / NRRL Y-1056) (Yeast).